Reading from the N-terminus, the 369-residue chain is Trans-enoyl reductase pyiC (369 aa).

52–55 (CDYK) serves as a coordination point for NADP(+). Substrate is bound at residue 137–144 (TGIGTLGM). Residues 195-198 (SPKN), Y213, and 260-261 (LE) contribute to the NADP(+) site. Residue 280–284 (GPLLL) coordinates substrate. 349-350 (VS) is a binding site for NADP(+).

The protein belongs to the zinc-containing alcohol dehydrogenase family. In terms of assembly, monomer.

Its pathway is mycotoxin biosynthesis. Its function is as follows. Trans-enoyl reductase; part of the gene cluster that mediates the biosynthesis of the mycotoxin pyrichalasin H, a tyrosine-derived cytochalasan that inhibits the growth of rice seedlings, but also inhibits lymphocyte capping and actin polymerization and alters cell morphology. Pyrichalasin H is indicated as the responsible agent for the genus-specific pathogenicity of M.grisea toward crabgrass. The first step in the pathway is catalyzed by the O-methyltransferase pyiA which methylates free tyrosine to generate the precursor O-methyltyrosine. The hybrid PKS-NRPS pyiS, assisted by the enoyl reductase pyiC, are responsible for fusion of the O-methyltyrosine precursor and the polyketide backbone. The polyketide synthase module (PKS) of pyiS is responsible for the synthesis of the polyketide backbone and the downstream nonribosomal peptide synthetase (NRPS) amidates the carboxyl end of the polyketide with the O-methyltyrosine precursor. As the NRPS A-domain demonstrates substrate tolerance, pyiS can also use phenylalanine, tyrosine and even para-chlorophenylalanine as amino acid precursor, which leads to the production of novel cytochalasans, including halogenated cytochalasans. Because pyiS lacks a designated enoylreductase (ER) domain, the required activity is provided the enoyl reductase pyiC. Reduction by the hydrolyase pyiE, followed by dehydration and intra-molecular Diels-Alder cyclization by the Diels-Alderase pyiF then yield the required isoindolone-fused macrocycle. The tailoring cytochrome P450 monooxygenases piyD and piyG catalyze the hydroxylation at C-18 and C-7, respectivily, whereas the short-chain dehydrogenase/reductase pyiH reduces the carbonyl at C-21 in preparation for the transfer of an acetyl group by the acetyltransferase pyiB. These 3 reactions whose order is not clear yet, lead to the production of O-methylpyrichalasin J, a deacetylated pyrichalasin H. Finally, pyiB to converts O-methylpyrichalasin J into the final product pyrichalasin H via acetylation of C-21. This Pyricularia grisea (Crabgrass-specific blast fungus) protein is Trans-enoyl reductase pyiC.